Reading from the N-terminus, the 491-residue chain is Ubiquitin carboxyl-terminal hydrolase 30 (491 aa).

Residues M1 to W31 are Mitochondrial intermembrane-facing. A helical transmembrane segment spans residues G32–I52. Residues S53–E491 lie on the Cytoplasmic side of the membrane. The region spanning P64 to M482 is the USP domain. C73 acts as the Nucleophile in catalysis. A compositionally biased stretch (polar residues) spans A346–T355. A disordered region spans residues A346–K365. The active-site Proton acceptor is H432.

Belongs to the peptidase C19 family.

It localises to the mitochondrion outer membrane. The enzyme catalyses Thiol-dependent hydrolysis of ester, thioester, amide, peptide and isopeptide bonds formed by the C-terminal Gly of ubiquitin (a 76-residue protein attached to proteins as an intracellular targeting signal).. Functionally, deubiquitinating enzyme that acts as a key inhibitor of mitophagy by counteracting the action of parkin (PRKN). The chain is Ubiquitin carboxyl-terminal hydrolase 30 (usp30) from Danio rerio (Zebrafish).